The primary structure comprises 62 residues: Large ribosomal subunit protein uL29 (62 aa).

Belongs to the universal ribosomal protein uL29 family.

The chain is Large ribosomal subunit protein uL29 from Geobacter sp. (strain M21).